The primary structure comprises 417 residues: Serine--tRNA ligase (417 aa).

226–228 (TSE) lines the L-serine pocket. ATP-binding positions include 257-259 (RRE) and valine 273. Residue glutamate 280 coordinates L-serine. 344-347 (EVTS) is a binding site for ATP. Residue threonine 379 coordinates L-serine.

Belongs to the class-II aminoacyl-tRNA synthetase family. Type-1 seryl-tRNA synthetase subfamily. Homodimer. The tRNA molecule binds across the dimer.

Its subcellular location is the cytoplasm. It carries out the reaction tRNA(Ser) + L-serine + ATP = L-seryl-tRNA(Ser) + AMP + diphosphate + H(+). The catalysed reaction is tRNA(Sec) + L-serine + ATP = L-seryl-tRNA(Sec) + AMP + diphosphate + H(+). Its pathway is aminoacyl-tRNA biosynthesis; selenocysteinyl-tRNA(Sec) biosynthesis; L-seryl-tRNA(Sec) from L-serine and tRNA(Sec): step 1/1. In terms of biological role, catalyzes the attachment of serine to tRNA(Ser). Is also able to aminoacylate tRNA(Sec) with serine, to form the misacylated tRNA L-seryl-tRNA(Sec), which will be further converted into selenocysteinyl-tRNA(Sec). This Tropheryma whipplei (strain TW08/27) (Whipple's bacillus) protein is Serine--tRNA ligase.